Consider the following 447-residue polypeptide: tRNA (guanine(37)-N(1))-methyltransferase (447 aa).

S-adenosyl-L-methionine is bound by residues H241, 285–286 (DL), and 313–314 (DV).

This sequence belongs to the class I-like SAM-binding methyltransferase superfamily. TRM5/TYW2 family. In terms of assembly, monomer.

It is found in the mitochondrion matrix. The protein resides in the nucleus. The protein localises to the cytoplasm. It carries out the reaction guanosine(37) in tRNA + S-adenosyl-L-methionine = N(1)-methylguanosine(37) in tRNA + S-adenosyl-L-homocysteine + H(+). Specifically methylates the N1 position of guanosine-37 in various cytoplasmic and mitochondrial tRNAs. Methylation is not dependent on the nature of the nucleoside 5' of the target nucleoside. This is the first step in the biosynthesis of wybutosine (yW), a modified base adjacent to the anticodon of tRNAs and required for accurate decoding. This Giardia intestinalis (strain ATCC 50803 / WB clone C6) (Giardia lamblia) protein is tRNA (guanine(37)-N(1))-methyltransferase.